Reading from the N-terminus, the 227-residue chain is Ribosomal RNA large subunit methyltransferase E (227 aa).

S-adenosyl-L-methionine is bound by residues glycine 78, tryptophan 80, aspartate 103, aspartate 119, and aspartate 143. The active-site Proton acceptor is lysine 183.

This sequence belongs to the class I-like SAM-binding methyltransferase superfamily. RNA methyltransferase RlmE family.

Its subcellular location is the cytoplasm. The enzyme catalyses uridine(2552) in 23S rRNA + S-adenosyl-L-methionine = 2'-O-methyluridine(2552) in 23S rRNA + S-adenosyl-L-homocysteine + H(+). Functionally, specifically methylates the uridine in position 2552 of 23S rRNA at the 2'-O position of the ribose in the fully assembled 50S ribosomal subunit. The protein is Ribosomal RNA large subunit methyltransferase E of Rickettsia akari (strain Hartford).